The chain runs to 391 residues: Processive diacylglycerol beta-glucosyltransferase (391 aa).

The protein belongs to the glycosyltransferase 28 family. UgtP subfamily.

It localises to the cell membrane. It carries out the reaction a 1,2-diacyl-3-O-(beta-D-glucopyranosyl)-sn-glycerol + UDP-alpha-D-glucose = a 1,2-diacyl-3-O-(beta-D-Glc-(1-&gt;6)-beta-D-Glc)-sn-glycerol + UDP + H(+). It catalyses the reaction a 1,2-diacyl-sn-glycerol + UDP-alpha-D-glucose = a 1,2-diacyl-3-O-(beta-D-glucopyranosyl)-sn-glycerol + UDP + H(+). Its pathway is glycolipid metabolism; diglucosyl-diacylglycerol biosynthesis. In terms of biological role, processive glucosyltransferase involved in the biosynthesis of both the bilayer- and non-bilayer-forming membrane glucolipids. Is able to successively transfer two glucosyl residues to diacylglycerol (DAG), thereby catalyzing the formation of beta-monoglucosyl-DAG (3-O-(beta-D-glucopyranosyl)-1,2-diacyl-sn-glycerol) and beta-diglucosyl-DAG (3-O-(beta-D-glucopyranosyl-beta-(1-&gt;6)-D-glucopyranosyl)-1,2-diacyl-sn-glycerol). Beta-diglucosyl-DAG is the predominant glycolipid found in Bacillales and is also used as a membrane anchor for lipoteichoic acid (LTA). The polypeptide is Processive diacylglycerol beta-glucosyltransferase (Staphylococcus aureus (strain MRSA252)).